Here is a 308-residue protein sequence, read N- to C-terminus: Solute carrier family 25 member 47 (308 aa).

Solcar repeat units follow at residues 1–80, 93–206, and 215–302; these read MDFV…CLAH, PTKA…LCEW, and PDVP…VLRL. 6 helical membrane-spanning segments follow: residues 3-23, 49-69, 98-116, 190-210, 217-237, and 273-293; these read FVAG…LDTV, VWGF…VSSV, ITLS…TSPT, GHSF…LSPA, VPGV…VATP, and VLFK…MVVF.

The protein belongs to the mitochondrial carrier (TC 2.A.29) family. Specifically expressed in liver.

The protein resides in the mitochondrion inner membrane. It localises to the mitochondrion outer membrane. It catalyses the reaction NAD(+)(in) = NAD(+)(out). It carries out the reaction acetyl-CoA(in) = acetyl-CoA(out). Its function is as follows. Mitochondrial NAD(+) transporter that acts as a 'metabolic gate' in hepatic lipogenesis. Provides NAD(+) substrate to mitochondrial SIRT3 deacetylase and enables its NAD(+)-dependent activities in mitochondrial energy metabolism. This triggers downstream activation of PRKAA1/AMPK-alpha signaling cascade that negatively regulates sterol regulatory element-binding protein (SREBP) transcriptional activities and ATP-consuming lipogenesis to restore cellular energy balance. May transport other mitochondrial metabolites having an aromatic nucleotide and phosphate groups, such as acetyl-CoA. Does not transport amino acids. The transport mechanism remains to be elucidated. The chain is Solute carrier family 25 member 47 from Homo sapiens (Human).